A 44-amino-acid chain; its full sequence is Large ribosomal subunit protein bL36 (44 aa).

This sequence belongs to the bacterial ribosomal protein bL36 family.

The chain is Large ribosomal subunit protein bL36 from Pseudoalteromonas translucida (strain TAC 125).